We begin with the raw amino-acid sequence, 257 residues long: 1-(5-phosphoribosyl)-5-[(5-phosphoribosylamino)methylideneamino] imidazole-4-carboxamide isomerase (257 aa).

Aspartate 8 acts as the Proton acceptor in catalysis. Residue aspartate 129 is the Proton donor of the active site.

This sequence belongs to the HisA/HisF family.

The protein resides in the cytoplasm. The catalysed reaction is 1-(5-phospho-beta-D-ribosyl)-5-[(5-phospho-beta-D-ribosylamino)methylideneamino]imidazole-4-carboxamide = 5-[(5-phospho-1-deoxy-D-ribulos-1-ylimino)methylamino]-1-(5-phospho-beta-D-ribosyl)imidazole-4-carboxamide. Its pathway is amino-acid biosynthesis; L-histidine biosynthesis; L-histidine from 5-phospho-alpha-D-ribose 1-diphosphate: step 4/9. This chain is 1-(5-phosphoribosyl)-5-[(5-phosphoribosylamino)methylideneamino] imidazole-4-carboxamide isomerase, found in Gloeothece citriformis (strain PCC 7424) (Cyanothece sp. (strain PCC 7424)).